Consider the following 174-residue polypeptide: Alkyl hydroperoxide reductase AhpD (174 aa).

The active-site Proton donor is Cys130. Cys130 and Cys133 are disulfide-bonded. Cys133 (cysteine sulfenic acid (-SOH) intermediate) is an active-site residue.

It belongs to the AhpD family. In terms of assembly, homotrimer.

It carries out the reaction N(6)-[(R)-dihydrolipoyl]-L-lysyl-[lipoyl-carrier protein] + a hydroperoxide = N(6)-[(R)-lipoyl]-L-lysyl-[lipoyl-carrier protein] + an alcohol + H2O. Its function is as follows. Antioxidant protein with alkyl hydroperoxidase activity. Required for the reduction of the AhpC active site cysteine residues and for the regeneration of the AhpC enzyme activity. The sequence is that of Alkyl hydroperoxide reductase AhpD from Corynebacterium kroppenstedtii (strain DSM 44385 / JCM 11950 / CIP 105744 / CCUG 35717).